Reading from the N-terminus, the 181-residue chain is Inner membrane-spanning protein YciB (181 aa).

Helical transmembrane passes span 10–30 (LVIFFAVYKFFDIYIASGALI), 50–70 (MHLITFAMVTVFGTLTLVFHD), 72–92 (AFIKWKVTIIYALFALALGVS), 118–138 (VTWYWVSFFAICGLVNIYVAF), and 148–168 (FKVFGLTALTLINTVITVFYL).

It belongs to the YciB family.

It is found in the cell inner membrane. Plays a role in cell envelope biogenesis, maintenance of cell envelope integrity and membrane homeostasis. The polypeptide is Inner membrane-spanning protein YciB (Shewanella oneidensis (strain ATCC 700550 / JCM 31522 / CIP 106686 / LMG 19005 / NCIMB 14063 / MR-1)).